Here is a 550-residue protein sequence, read N- to C-terminus: CTP synthase (550 aa).

Residues Met-1–Leu-267 are amidoligase domain. Ser-14 is a CTP binding site. Ser-14 is a binding site for UTP. ATP is bound by residues Ser-15–Leu-20 and Asp-72. 2 residues coordinate Mg(2+): Asp-72 and Glu-141. CTP is bound by residues Asp-148–Glu-150, Lys-188–Gln-193, and Lys-224. UTP contacts are provided by residues Lys-188–Gln-193 and Lys-224. The Glutamine amidotransferase type-1 domain occupies Thr-292–Gly-545. L-glutamine is bound at residue Gly-354. Residue Cys-381 is the Nucleophile; for glutamine hydrolysis of the active site. Residues Leu-382–Gln-385, Glu-405, and Arg-473 each bind L-glutamine. Active-site residues include His-518 and Glu-520.

This sequence belongs to the CTP synthase family. Homotetramer.

The enzyme catalyses UTP + L-glutamine + ATP + H2O = CTP + L-glutamate + ADP + phosphate + 2 H(+). It carries out the reaction L-glutamine + H2O = L-glutamate + NH4(+). It catalyses the reaction UTP + NH4(+) + ATP = CTP + ADP + phosphate + 2 H(+). It functions in the pathway pyrimidine metabolism; CTP biosynthesis via de novo pathway; CTP from UDP: step 2/2. With respect to regulation, allosterically activated by GTP, when glutamine is the substrate; GTP has no effect on the reaction when ammonia is the substrate. The allosteric effector GTP functions by stabilizing the protein conformation that binds the tetrahedral intermediate(s) formed during glutamine hydrolysis. Inhibited by the product CTP, via allosteric rather than competitive inhibition. In terms of biological role, catalyzes the ATP-dependent amination of UTP to CTP with either L-glutamine or ammonia as the source of nitrogen. Regulates intracellular CTP levels through interactions with the four ribonucleotide triphosphates. The sequence is that of CTP synthase from Nitratidesulfovibrio vulgaris (strain DSM 19637 / Miyazaki F) (Desulfovibrio vulgaris).